The primary structure comprises 285 residues: CBY1-interacting BAR domain-containing protein 1-B (285 aa).

Residues 1–48 (MSQTPEARTRDNQTRQIQESVNNVEKHFGELCQIFAGYVRKTARLRDK) constitute a mitochondrion transit peptide. Residues 11–221 (DNQTRQIQES…DIDEEEDLEV (211 aa)) are BAR-like. A coiled-coil region spans residues 142-184 (RQIISQAETELQRATMDAARISQQLEETIDNFEKQKIKDIKKL). A compositionally biased stretch (polar residues) spans 241-261 (NSRSGSTSRAPSVISQPPGNR). Positions 241–285 (NSRSGSTSRAPSVISQPPGNRQKNRMEDDEDGEDDNDENSTEDEN) are disordered. Over residues 267–285 (EDDEDGEDDNDENSTEDEN) the composition is skewed to acidic residues.

It belongs to the CIBAR family.

Its subcellular location is the cytoplasm. It is found in the cytoskeleton. The protein resides in the microtubule organizing center. It localises to the centrosome. The protein localises to the centriole. Its subcellular location is the cell projection. It is found in the cilium. The protein resides in the nucleus. It localises to the mitochondrion inner membrane. The protein localises to the flagellum. In terms of biological role, plays a critical role in regulating mitochondrial ultrastructure and function by maintaining the integrity of mitochondrial morphology, particularly the organization of cristae. Plays a crucial role in ciliogenesis. Plays a key role in the correct positioning of the annulus, a septin-based ring structure in the sperm flagellum, serving both as a physical barrier and a membrane diffusion barrier that separates the midpiece (MP) from the principal piece (PP). The protein is CBY1-interacting BAR domain-containing protein 1-B of Xenopus laevis (African clawed frog).